The sequence spans 265 residues: 4-hydroxy-tetrahydrodipicolinate reductase (265 aa).

9 to 14 (GPRGRM) is a binding site for NAD(+). Arg-37 provides a ligand contact to NADP(+). Residues 98–100 (GTT) and 124–127 (APNF) each bind NAD(+). Catalysis depends on His-154, which acts as the Proton donor/acceptor. His-155 serves as a coordination point for (S)-2,3,4,5-tetrahydrodipicolinate. Lys-158 (proton donor) is an active-site residue. 164 to 165 (GT) is a (S)-2,3,4,5-tetrahydrodipicolinate binding site.

Belongs to the DapB family.

Its subcellular location is the cytoplasm. The catalysed reaction is (S)-2,3,4,5-tetrahydrodipicolinate + NAD(+) + H2O = (2S,4S)-4-hydroxy-2,3,4,5-tetrahydrodipicolinate + NADH + H(+). It catalyses the reaction (S)-2,3,4,5-tetrahydrodipicolinate + NADP(+) + H2O = (2S,4S)-4-hydroxy-2,3,4,5-tetrahydrodipicolinate + NADPH + H(+). It participates in amino-acid biosynthesis; L-lysine biosynthesis via DAP pathway; (S)-tetrahydrodipicolinate from L-aspartate: step 4/4. In terms of biological role, catalyzes the conversion of 4-hydroxy-tetrahydrodipicolinate (HTPA) to tetrahydrodipicolinate. In Geobacillus thermodenitrificans (strain NG80-2), this protein is 4-hydroxy-tetrahydrodipicolinate reductase.